The following is a 779-amino-acid chain: DNA topoisomerase 1 (779 aa).

The region spanning 1-111 is the Toprim domain; it reads MKLVIVESPA…VESDDFFKRV (111 aa). Mg(2+) is bound by residues E7 and D80. The Topo IA-type catalytic domain occupies 132-568; the sequence is DTNLVNAQQA…FWSGFNNNIE (437 aa). The interval 166–171 is interaction with DNA; sequence SAGRVQ. Y304 (O-(5'-phospho-DNA)-tyrosine intermediate) is an active-site residue. The C4-type zinc finger occupies 600-627; sequence CPSCKTGQLSLKLGKFGAFLACSNYPEC.

This sequence belongs to the type IA topoisomerase family. Monomer. Mg(2+) serves as cofactor.

It carries out the reaction ATP-independent breakage of single-stranded DNA, followed by passage and rejoining.. Releases the supercoiling and torsional tension of DNA, which is introduced during the DNA replication and transcription, by transiently cleaving and rejoining one strand of the DNA duplex. Introduces a single-strand break via transesterification at a target site in duplex DNA. The scissile phosphodiester is attacked by the catalytic tyrosine of the enzyme, resulting in the formation of a DNA-(5'-phosphotyrosyl)-enzyme intermediate and the expulsion of a 3'-OH DNA strand. The free DNA strand then undergoes passage around the unbroken strand, thus removing DNA supercoils. Finally, in the religation step, the DNA 3'-OH attacks the covalent intermediate to expel the active-site tyrosine and restore the DNA phosphodiester backbone. The protein is DNA topoisomerase 1 of Rickettsia typhi (strain ATCC VR-144 / Wilmington).